We begin with the raw amino-acid sequence, 222 residues long: DNA-directed RNA polymerase V subunit 5A (222 aa).

The protein belongs to the archaeal Rpo5/eukaryotic RPB5 RNA polymerase subunit family. In terms of assembly, component of the RNA polymerase V complex. As to expression, expressed in roots, leaves, siliques and seeds, and to a lower level, in flower buds and flowers.

It localises to the nucleus. DNA-dependent RNA polymerase catalyzes the transcription of DNA into RNA using the four ribonucleoside triphosphates as substrates. Component of RNA polymerase V involved in RNA-directed DNA methylation-dependent (RdDM) silencing of endogenous repeated sequences, including transposable elements. Required for establishment of DNA methylation. The protein is DNA-directed RNA polymerase V subunit 5A (NRPE5A) of Arabidopsis thaliana (Mouse-ear cress).